The primary structure comprises 321 residues: Ribose-phosphate pyrophosphokinase (321 aa).

ATP-binding positions include 44–46 (DGE) and 103–104 (RQ). Residues H137 and D179 each contribute to the Mg(2+) site. The active site involves K202. D-ribose 5-phosphate-binding positions include R204, D228, and 232 to 236 (DTAGT).

It belongs to the ribose-phosphate pyrophosphokinase family. Class I subfamily. In terms of assembly, homohexamer. Mg(2+) serves as cofactor.

The protein localises to the cytoplasm. It catalyses the reaction D-ribose 5-phosphate + ATP = 5-phospho-alpha-D-ribose 1-diphosphate + AMP + H(+). The protein operates within metabolic intermediate biosynthesis; 5-phospho-alpha-D-ribose 1-diphosphate biosynthesis; 5-phospho-alpha-D-ribose 1-diphosphate from D-ribose 5-phosphate (route I): step 1/1. Involved in the biosynthesis of the central metabolite phospho-alpha-D-ribosyl-1-pyrophosphate (PRPP) via the transfer of pyrophosphoryl group from ATP to 1-hydroxyl of ribose-5-phosphate (Rib-5-P). The polypeptide is Ribose-phosphate pyrophosphokinase (Staphylococcus saprophyticus subsp. saprophyticus (strain ATCC 15305 / DSM 20229 / NCIMB 8711 / NCTC 7292 / S-41)).